We begin with the raw amino-acid sequence, 364 residues long: UDP-3-O-acylglucosamine N-acyltransferase (364 aa).

His-257 acts as the Proton acceptor in catalysis.

This sequence belongs to the transferase hexapeptide repeat family. LpxD subfamily. Homotrimer.

The catalysed reaction is a UDP-3-O-[(3R)-3-hydroxyacyl]-alpha-D-glucosamine + a (3R)-hydroxyacyl-[ACP] = a UDP-2-N,3-O-bis[(3R)-3-hydroxyacyl]-alpha-D-glucosamine + holo-[ACP] + H(+). It functions in the pathway bacterial outer membrane biogenesis; LPS lipid A biosynthesis. Catalyzes the N-acylation of UDP-3-O-acylglucosamine using 3-hydroxyacyl-ACP as the acyl donor. Is involved in the biosynthesis of lipid A, a phosphorylated glycolipid that anchors the lipopolysaccharide to the outer membrane of the cell. The protein is UDP-3-O-acylglucosamine N-acyltransferase of Paracoccus denitrificans (strain Pd 1222).